A 511-amino-acid polypeptide reads, in one-letter code: Trigger factor (511 aa).

The 86-residue stretch at 168 to 253 folds into the PPIase FKBP-type domain; it reads GDLLTIDFVG…VKEVKAPAEV (86 aa). Residues 446–511 form a disordered region; sequence DEHEHHHHDH…KAPAKKKKED (66 aa). Positions 455 to 478 are enriched in basic and acidic residues; it reads HDHDHDHDHDHDHGHDHDHGDEKP. The segment covering 479–488 has biased composition (basic residues); that stretch reads KKKPAAKKAA. The span at 489–498 shows a compositional bias: basic and acidic residues; that stretch reads AKSDDGEAKP. A compositionally biased stretch (basic residues) spans 499–511; sequence AAKKAPAKKKKED.

It belongs to the FKBP-type PPIase family. Tig subfamily.

The protein resides in the cytoplasm. The catalysed reaction is [protein]-peptidylproline (omega=180) = [protein]-peptidylproline (omega=0). Functionally, involved in protein export. Acts as a chaperone by maintaining the newly synthesized protein in an open conformation. Functions as a peptidyl-prolyl cis-trans isomerase. This is Trigger factor from Parvibaculum lavamentivorans (strain DS-1 / DSM 13023 / NCIMB 13966).